Here is a 254-residue protein sequence, read N- to C-terminus: MVIANSNIIFVAGLGGIGLDTSREIVKSGPKNLVVLDRVDNPAAIAELKALNPKVTITFYPYDVTVPLAETKKLLKTIFDKLKTVDLLINGAGILDDNQIERTIAVNFTGTVNTTTAILDFWDKRKGGPGGVVANICSVTGFNSIYQVPVYSASKAAALSFTTSIAKLAHITGVTAYSINPGITKTVLVHKFNSWLGVEPRVAELLLEHPTQTTLQCAQNFVKAIEANQNGAIWKLDLGRLDAIEWTKHWDSGI.

10 to 33 contacts NAD(+); the sequence is FVAGLGGIGLDTSREIVKSGPKNL. Residue S138 participates in substrate binding. Y151 acts as the Proton acceptor in catalysis.

It belongs to the short-chain dehydrogenases/reductases (SDR) family. As to quaternary structure, homodimer.

The enzyme catalyses a primary alcohol + NAD(+) = an aldehyde + NADH + H(+). It catalyses the reaction a secondary alcohol + NAD(+) = a ketone + NADH + H(+). The protein is Alcohol dehydrogenase (Adh) of Drosophila grimshawi (Hawaiian fruit fly).